We begin with the raw amino-acid sequence, 339 residues long: Polyhydroxybutyrate depolymerase (339 aa).

The N-terminal stretch at 1–20 (MFDSVKIAWLVALGAAQVAA) is a signal peptide. Residue serine 39 is part of the active site. Cysteines 70 and 79 form a disulfide. The active site involves aspartate 121. Residue asparagine 144 is glycosylated (N-linked (GlcNAc...) asparagine). Histidine 155 is an active-site residue. 3 disulfide bridges follow: cysteine 169–cysteine 180, cysteine 234–cysteine 241, and cysteine 250–cysteine 304. Tryptophan 307 lines the (3R)-hydroxybutanoate trimer pocket.

The protein belongs to the carbohydrate esterase 1 (CE1) family.

It is found in the secreted. It catalyses the reaction [(3R)-hydroxybutanoate](n) + H2O = [(3R)-hydroxybutanoate](n-1) + (R)-3-hydroxybutanoate + H(+). The enzyme is completely inhibited by dithiothreitol (DTT) and diisopropylfluorophosphate (DFP), and partially inhibited by HgCl(2) and by enzyme3-(p-nitrophenoxy)propane (EPNP). Activity is not affected by N-ethylmaleimide (NEM) or phenylmethylsulfonyl fluoride (PMSF). Esterase involved in the hydrolysis of polyhydroxybutyrate, a microbial polyester that can be produced from renewable resources. This is Polyhydroxybutyrate depolymerase from Talaromyces funiculosus (Fruitlet core rot fungus).